We begin with the raw amino-acid sequence, 687 residues long: Putative lipase YDR444W (687 aa).

The Charge relay system role is filled by S284. 3 disordered regions span residues 429 to 472 (IRKK…AESP), 491 to 513 (KINK…EQGV), and 650 to 687 (ELAE…ENAT). Over residues 436-463 (SPTSSEFVSSDSPESSGASSPSNENGNN) the composition is skewed to low complexity. The segment covering 670–681 (RSNEYNEGEISK) has biased composition (basic and acidic residues).

This sequence belongs to the putative lipase ROG1 family.

It localises to the cytoplasm. This is Putative lipase YDR444W from Saccharomyces cerevisiae (strain ATCC 204508 / S288c) (Baker's yeast).